We begin with the raw amino-acid sequence, 282 residues long: Shikimate dehydrogenase (NADP(+)) (282 aa).

Residues S15 to S17 and T62 each bind shikimate. The active-site Proton acceptor is K66. 2 residues coordinate shikimate: N87 and D103. Residues G128–A132, N152–K157, and M216 contribute to the NADP(+) site. A shikimate-binding site is contributed by Y218. G240 is a binding site for NADP(+).

The protein belongs to the shikimate dehydrogenase family. In terms of assembly, homodimer.

The catalysed reaction is shikimate + NADP(+) = 3-dehydroshikimate + NADPH + H(+). It functions in the pathway metabolic intermediate biosynthesis; chorismate biosynthesis; chorismate from D-erythrose 4-phosphate and phosphoenolpyruvate: step 4/7. Functionally, involved in the biosynthesis of the chorismate, which leads to the biosynthesis of aromatic amino acids. Catalyzes the reversible NADPH linked reduction of 3-dehydroshikimate (DHSA) to yield shikimate (SA). The chain is Shikimate dehydrogenase (NADP(+)) from Nitrosococcus oceani (strain ATCC 19707 / BCRC 17464 / JCM 30415 / NCIMB 11848 / C-107).